Consider the following 64-residue polypeptide: Cytochrome c oxidase subunit 5C (64 aa).

The chain crosses the membrane as a helical span at residues 16 to 34 (VVKELVIGFSLGLVAGGFW).

Belongs to the cytochrome c oxidase subunit 5C family. As to quaternary structure, sweet potato cytochrome C oxidase consists of at least seven different polypeptides species, subunits I, II, III, IV, Va, Vb, and Vc in order of MW.

Its subcellular location is the mitochondrion inner membrane. Functionally, this protein is one of the nuclear-coded polypeptide chains of cytochrome c oxidase, the terminal oxidase in mitochondrial electron transport. The polypeptide is Cytochrome c oxidase subunit 5C (COX5C) (Ipomoea batatas (Sweet potato)).